Here is a 268-residue protein sequence, read N- to C-terminus: Imidazole glycerol phosphate synthase subunit HisF (268 aa).

Residues Asp-12 and Asp-131 contribute to the active site.

The protein belongs to the HisA/HisF family. Heterodimer of HisH and HisF.

It localises to the cytoplasm. It catalyses the reaction 5-[(5-phospho-1-deoxy-D-ribulos-1-ylimino)methylamino]-1-(5-phospho-beta-D-ribosyl)imidazole-4-carboxamide + L-glutamine = D-erythro-1-(imidazol-4-yl)glycerol 3-phosphate + 5-amino-1-(5-phospho-beta-D-ribosyl)imidazole-4-carboxamide + L-glutamate + H(+). It functions in the pathway amino-acid biosynthesis; L-histidine biosynthesis; L-histidine from 5-phospho-alpha-D-ribose 1-diphosphate: step 5/9. In terms of biological role, IGPS catalyzes the conversion of PRFAR and glutamine to IGP, AICAR and glutamate. The HisF subunit catalyzes the cyclization activity that produces IGP and AICAR from PRFAR using the ammonia provided by the HisH subunit. This is Imidazole glycerol phosphate synthase subunit HisF from Salinibacter ruber (strain DSM 13855 / M31).